The sequence spans 65 residues: Protein translocase subunit SecE (65 aa).

A helical transmembrane segment spans residues 38-58; sequence IVIVTVVFFLIFFYALDLGIG.

The protein belongs to the SecE/SEC61-gamma family. As to quaternary structure, component of the Sec protein translocase complex. Heterotrimer consisting of SecY, SecE and SecG subunits. The heterotrimers can form oligomers, although 1 heterotrimer is thought to be able to translocate proteins. Interacts with the ribosome. Interacts with SecDF, and other proteins may be involved. Interacts with SecA.

The protein localises to the cell membrane. Essential subunit of the Sec protein translocation channel SecYEG. Clamps together the 2 halves of SecY. May contact the channel plug during translocation. The sequence is that of Protein translocase subunit SecE from Staphylococcus carnosus (strain TM300).